Reading from the N-terminus, the 311-residue chain is Pyrimidine-specific ribonucleoside hydrolase RihA (311 aa).

Residue H240 is part of the active site.

It belongs to the IUNH family. RihA subfamily.

In terms of biological role, hydrolyzes cytidine or uridine to ribose and cytosine or uracil, respectively. The polypeptide is Pyrimidine-specific ribonucleoside hydrolase RihA (Salmonella paratyphi C (strain RKS4594)).